The chain runs to 283 residues: Elongation factor Ts (283 aa).

Residues 80–83 are involved in Mg(2+) ion dislocation from EF-Tu; sequence TDFV.

Belongs to the EF-Ts family.

It localises to the cytoplasm. Its function is as follows. Associates with the EF-Tu.GDP complex and induces the exchange of GDP to GTP. It remains bound to the aminoacyl-tRNA.EF-Tu.GTP complex up to the GTP hydrolysis stage on the ribosome. The sequence is that of Elongation factor Ts from Haemophilus ducreyi (strain 35000HP / ATCC 700724).